Here is a 366-residue protein sequence, read N- to C-terminus: D-alanine--D-alanine ligase (366 aa).

Residues 140 to 346 (KALFAQSDLP…YGELLSRLVD (207 aa)) enclose the ATP-grasp domain. 173 to 228 (EDRLGYPCFVKPANMGSSVGISKATNRAELVAAFDDAVRYDRKLIVEKGINVREIE) lines the ATP pocket. Positions 299, 313, and 315 each coordinate Mg(2+).

It belongs to the D-alanine--D-alanine ligase family. It depends on Mg(2+) as a cofactor. The cofactor is Mn(2+).

Its subcellular location is the cytoplasm. The enzyme catalyses 2 D-alanine + ATP = D-alanyl-D-alanine + ADP + phosphate + H(+). It functions in the pathway cell wall biogenesis; peptidoglycan biosynthesis. In terms of biological role, cell wall formation. The chain is D-alanine--D-alanine ligase from Heliobacterium modesticaldum (strain ATCC 51547 / Ice1).